Reading from the N-terminus, the 290-residue chain is N-acetylmannosamine kinase (290 aa).

Residues Ala-6–Lys-13 and Gly-132–Leu-139 each bind ATP. Residues His-156, Cys-166, Cys-168, and Cys-173 each contribute to the Zn(2+) site.

The protein belongs to the ROK (NagC/XylR) family. NanK subfamily. As to quaternary structure, homodimer.

It catalyses the reaction an N-acyl-D-mannosamine + ATP = an N-acyl-D-mannosamine 6-phosphate + ADP + H(+). Its pathway is amino-sugar metabolism; N-acetylneuraminate degradation; D-fructose 6-phosphate from N-acetylneuraminate: step 2/5. Functionally, catalyzes the phosphorylation of N-acetylmannosamine (ManNAc) to ManNAc-6-P. This Yersinia pestis (strain Pestoides F) protein is N-acetylmannosamine kinase.